The sequence spans 445 residues: Maltoporin (445 aa).

The signal sequence occupies residues 1-24; it reads MITLRKLPLAVAVAAGVMSAQAMA.

The protein belongs to the porin LamB (TC 1.B.3) family. In terms of assembly, homotrimer formed of three 18-stranded antiparallel beta-barrels, containing three independent channels.

The protein localises to the cell outer membrane. The catalysed reaction is beta-maltose(in) = beta-maltose(out). Involved in the transport of maltose and maltodextrins. This chain is Maltoporin, found in Shigella flexneri.